The sequence spans 172 residues: ATP synthase subunit b (172 aa).

A helical transmembrane segment spans residues I17 to P37.

This sequence belongs to the ATPase B chain family. In terms of assembly, F-type ATPases have 2 components, F(1) - the catalytic core - and F(0) - the membrane proton channel. F(1) has five subunits: alpha(3), beta(3), gamma(1), delta(1), epsilon(1). F(0) has three main subunits: a(1), b(2) and c(10-14). The alpha and beta chains form an alternating ring which encloses part of the gamma chain. F(1) is attached to F(0) by a central stalk formed by the gamma and epsilon chains, while a peripheral stalk is formed by the delta and b chains.

Its subcellular location is the cell membrane. In terms of biological role, f(1)F(0) ATP synthase produces ATP from ADP in the presence of a proton or sodium gradient. F-type ATPases consist of two structural domains, F(1) containing the extramembraneous catalytic core and F(0) containing the membrane proton channel, linked together by a central stalk and a peripheral stalk. During catalysis, ATP synthesis in the catalytic domain of F(1) is coupled via a rotary mechanism of the central stalk subunits to proton translocation. Functionally, component of the F(0) channel, it forms part of the peripheral stalk, linking F(1) to F(0). In Tropheryma whipplei (strain TW08/27) (Whipple's bacillus), this protein is ATP synthase subunit b.